A 185-amino-acid polypeptide reads, in one-letter code: Ribosome-recycling factor (185 aa).

It belongs to the RRF family.

It localises to the cytoplasm. In terms of biological role, responsible for the release of ribosomes from messenger RNA at the termination of protein biosynthesis. May increase the efficiency of translation by recycling ribosomes from one round of translation to another. This Wolbachia sp. subsp. Brugia malayi (strain TRS) protein is Ribosome-recycling factor.